The primary structure comprises 952 residues: Serine/threonine-protein kinase atg1 (952 aa).

In terms of domain architecture, Protein kinase spans 23-329 (FTINEQIGKG…FPEYFAHPVV (307 aa)). Residues 29–37 (IGKGSFATV) and Lys52 contribute to the ATP site. The active-site Proton acceptor is the Asp166. 4 disordered regions span residues 331-478 (EPIP…EAEQ), 510-573 (GRAN…SSPS), 783-806 (RLPEDHPGHPNNRSTASRLVGGSS), and 920-952 (AIAKHQSMPPPSSSPRRSYSGGTTPTINNTPPK). 2 stretches are compositionally biased toward basic and acidic residues: residues 338–347 (GDDRPKEKSP) and 356–372 (SLRDRQRESPTVKHIDT). A compositionally biased stretch (polar residues) spans 386–398 (SPRTPNIESNQPF). Residues 429–439 (PRQRDRKDRTE) show a composition bias toward basic and acidic residues. Composition is skewed to polar residues over residues 459–475 (ANLQPKNEVQSSNSITE), 553–573 (PDTSSARNSYGSYGKTGSSPS), and 793–806 (NNRSTASRLVGGSS). The segment covering 933 to 952 (SPRRSYSGGTTPTINNTPPK) has biased composition (low complexity).

Belongs to the protein kinase superfamily. Ser/Thr protein kinase family. APG1/unc-51/ULK1 subfamily. Homodimer. Forms a ternary complex with ATG13 and ATG17.

It localises to the cytoplasm. Its subcellular location is the preautophagosomal structure membrane. The enzyme catalyses L-seryl-[protein] + ATP = O-phospho-L-seryl-[protein] + ADP + H(+). It catalyses the reaction L-threonyl-[protein] + ATP = O-phospho-L-threonyl-[protein] + ADP + H(+). In terms of biological role, serine/threonine protein kinase involved in the cytoplasm to vacuole transport (Cvt) and found to be essential in autophagy, where it is required for the formation of autophagosomes. Involved in the clearance of protein aggregates which cannot be efficiently cleared by the proteasome. Required for selective autophagic degradation of the nucleus (nucleophagy) as well as for mitophagy which contributes to regulate mitochondrial quantity and quality by eliminating the mitochondria to a basal level to fulfill cellular energy requirements and preventing excess ROS production. Also involved in endoplasmic reticulum-specific autophagic process, in selective removal of ER-associated degradation (ERAD) substrates. Plays a key role in ATG9 and ATG23 cycling through the pre-autophagosomal structure and is necessary to promote ATG18 binding to ATG9 through phosphorylation of ATG9. Catalyzes phosphorylation of ATG4, decreasing the interaction between ATG4 and ATG8 and impairing deconjugation of PE-conjugated forms of ATG8. This chain is Serine/threonine-protein kinase atg1, found in Botryotinia fuckeliana (strain B05.10) (Noble rot fungus).